The chain runs to 1045 residues: Extracellular serine protease (1045 aa).

An N-terminal signal peptide occupies residues 1-27 (MILNKKLKLAYCVFLGCYGLSLHSSLA). The Peptidase S8 domain occupies 49-396 (QWGLEAISAE…WGRVNLRDAI (348 aa)). Residues Asp76, His112, and Ser341 each act as charge relay system in the active site. Positions 646 to 1045 (SLASTENDKE…SVNAGLTWRF (400 aa)) are excised as a propeptide. Residues 769–1045 (IKADDNGAWA…SVNAGLTWRF (277 aa)) enclose the Autotransporter domain.

This sequence belongs to the peptidase S8 family.

Its subcellular location is the secreted. The sequence is that of Extracellular serine protease from Serratia marcescens.